A 475-amino-acid chain; its full sequence is Ribulose bisphosphate carboxylase large chain (475 aa).

A propeptide spanning residues 1 to 2 is cleaved from the precursor; the sequence is MS. An N-acetylproline modification is found at P3. K14 bears the N6,N6,N6-trimethyllysine mark. Substrate-binding residues include N123 and T173. K175 functions as the Proton acceptor in the catalytic mechanism. Position 177 (K177) interacts with substrate. The Mg(2+) site is built by K201, D203, and E204. K201 carries the post-translational modification N6-carboxylysine. H294 serves as the catalytic Proton acceptor. The substrate site is built by R295, H327, and S379.

It belongs to the RuBisCO large chain family. Type I subfamily. As to quaternary structure, heterohexadecamer of 8 large chains and 8 small chains; disulfide-linked. The disulfide link is formed within the large subunit homodimers. The cofactor is Mg(2+). The disulfide bond which can form in the large chain dimeric partners within the hexadecamer appears to be associated with oxidative stress and protein turnover.

It localises to the plastid. Its subcellular location is the chloroplast. It carries out the reaction 2 (2R)-3-phosphoglycerate + 2 H(+) = D-ribulose 1,5-bisphosphate + CO2 + H2O. It catalyses the reaction D-ribulose 1,5-bisphosphate + O2 = 2-phosphoglycolate + (2R)-3-phosphoglycerate + 2 H(+). Its function is as follows. RuBisCO catalyzes two reactions: the carboxylation of D-ribulose 1,5-bisphosphate, the primary event in carbon dioxide fixation, as well as the oxidative fragmentation of the pentose substrate in the photorespiration process. Both reactions occur simultaneously and in competition at the same active site. The chain is Ribulose bisphosphate carboxylase large chain from Afrocarpus gracilior (African fern pine).